Consider the following 209-residue polypeptide: Glycerol-3-phosphate acyltransferase (209 aa).

A run of 5 helical transmembrane segments spans residues 7–27 (IELA…AIIV), 85–105 (AIIL…FFGF), 117–137 (VMFG…LFVA), 142–162 (ISSL…YLLA), and 166–183 (MAWV…FWRH).

The protein belongs to the PlsY family. Probably interacts with PlsX.

The protein localises to the cell inner membrane. It catalyses the reaction an acyl phosphate + sn-glycerol 3-phosphate = a 1-acyl-sn-glycero-3-phosphate + phosphate. The protein operates within lipid metabolism; phospholipid metabolism. Catalyzes the transfer of an acyl group from acyl-phosphate (acyl-PO(4)) to glycerol-3-phosphate (G3P) to form lysophosphatidic acid (LPA). This enzyme utilizes acyl-phosphate as fatty acyl donor, but not acyl-CoA or acyl-ACP. In Hydrogenovibrio crunogenus (strain DSM 25203 / XCL-2) (Thiomicrospira crunogena), this protein is Glycerol-3-phosphate acyltransferase.